The sequence spans 864 residues: Receptor like protein 24 (864 aa).

An N-terminal signal peptide occupies residues 1-29; it reads MKTVFKSLLLLHFLLLLLLCFVSPSSFFL. Over 30–830 the chain is Extracellular; it reads LKVPVGGLVA…EEKGEVINWK (801 aa). N61, N73, N94, and N112 each carry an N-linked (GlcNAc...) asparagine glycan. LRR repeat units lie at residues 100 to 125, 127 to 148, 156 to 182, 183 to 205, 207 to 229, 230 to 253, 254 to 277, 279 to 303, 305 to 326, 327 to 350, 351 to 376, 378 to 398, 399 to 423, 425 to 448, and 449 to 472; these read FHQL…FCNL, KLKL…DLMG, LGKL…LFEL, HSLR…KFGN, NKLE…TISN, LTRI…VQNL, TKLS…LFTF, SLST…STSS, LEIM…ISKL, INLK…LLSP, LKSL…SYIP, SMES…ILKH, LQNL…LWTL, QLSF…VFVN, and LSVR…PLSI. N-linked (GlcNAc...) asparagine glycosylation is found at N176, N194, N229, and N252. The N-linked (GlcNAc...) asparagine glycan is linked to N298. N-linked (GlcNAc...) asparagine glycosylation is present at N338. 2 N-linked (GlcNAc...) asparagine glycosylation sites follow: N433 and N448. The stretch at 473–492 is one LRR 16; degenerate repeat; the sequence is IGFSAIHNSFTGEIPLSICN. N-linked (GlcNAc...) asparagine glycans are attached at residues N492 and N505. 10 LRR repeats span residues 493–514, 515–538, 539–562, 564–585, 586–610, 613–637, 688–712, 713–735, 736–760, and 762–785; these read RTSL…PQCL, SNFM…FYTD, SSLK…LLNC, SLRF…WLKA, LPNL…HQGP, FPEL…FFVN, LTSY…IGLL, KALI…SFAN, LMNL…LGSL, and FLVY…QITG. The N-linked (GlcNAc...) asparagine glycan is linked to N561. N719 carries an N-linked (GlcNAc...) asparagine glycan. Residues 831-851 traverse the membrane as a helical segment; the sequence is AVAIGYAPGLLFGLAIAHLIA. The Cytoplasmic segment spans residues 852 to 864; the sequence is SYKPEWLVKIIGF.

This sequence belongs to the RLP family.

The protein localises to the cell membrane. This chain is Receptor like protein 24, found in Arabidopsis thaliana (Mouse-ear cress).